The chain runs to 1615 residues: ABC transporter A family member 4 (1615 aa).

7 consecutive transmembrane segments (helical) span residues Ile30–Ile50, Gly233–Ile253, Ser278–Ala298, Ile308–Leu328, Tyr337–Gly357, Leu365–Cys385, and Tyr405–Leu425. An ABC transmembrane type-2 domain is found at Thr182–Val383. Positions Ile492 to Ser727 constitute an ABC transporter 1 domain. Residue Gly528–Ser535 participates in ATP binding. A run of 7 helical transmembrane segments spans residues Ile855–Leu875, Phe1022–Ser1042, Ile1075–Val1095, Tyr1106–Phe1126, Val1135–Ile1155, Ile1174–Ile1194, and Leu1218–Ile1238. Residues Ile1293–Lys1528 form the ABC transporter 2 domain. Gly1331 to Ser1338 contributes to the ATP binding site.

This sequence belongs to the ABC transporter superfamily. ABCA family.

It localises to the membrane. The sequence is that of ABC transporter A family member 4 (abcA4) from Dictyostelium discoideum (Social amoeba).